The following is a 101-amino-acid chain: Small ribosomal subunit protein uS14 (101 aa).

Positions 1–21 (MAKTSAVEKNKRRRKSVAQQA) are disordered.

It belongs to the universal ribosomal protein uS14 family. As to quaternary structure, part of the 30S ribosomal subunit. Contacts proteins S3 and S10.

Its function is as follows. Binds 16S rRNA, required for the assembly of 30S particles and may also be responsible for determining the conformation of the 16S rRNA at the A site. The protein is Small ribosomal subunit protein uS14 of Agrobacterium fabrum (strain C58 / ATCC 33970) (Agrobacterium tumefaciens (strain C58)).